The chain runs to 277 residues: Urease accessory protein UreD (277 aa).

Positions 1–20 (MRQTAQEDASPAPMQRAHGT) are disordered.

Belongs to the UreD family. In terms of assembly, ureD, UreF and UreG form a complex that acts as a GTP-hydrolysis-dependent molecular chaperone, activating the urease apoprotein by helping to assemble the nickel containing metallocenter of UreC. The UreE protein probably delivers the nickel.

The protein localises to the cytoplasm. Functionally, required for maturation of urease via the functional incorporation of the urease nickel metallocenter. This is Urease accessory protein UreD from Chelativorans sp. (strain BNC1).